Here is a 255-residue protein sequence, read N- to C-terminus: dTDP-3-amino-3,6-dideoxy-alpha-D-glucopyranose N,N-dimethyltransferase (255 aa).

S-adenosyl-L-methionine-binding positions include Tyr-14, Tyr-22, Tyr-33, Ala-58, 58 to 59 (AC), Glu-79, 101 to 102 (DM), and Met-117.

This sequence belongs to the methyltransferase TylM1/DesVI family. As to quaternary structure, homodimer.

The catalysed reaction is dTDP-3-amino-3,6-dideoxy-alpha-D-glucose + 2 S-adenosyl-L-methionine = dTDP-alpha-D-mycaminose + 2 S-adenosyl-L-homocysteine + 2 H(+). It functions in the pathway antibiotic biosynthesis; tylosin biosynthesis. Its function is as follows. S-adenosyl-L-methionine-dependent methyltransferase involved in the biosynthesis of mycaminose, an essential structural component of the macrolide antibiotic tylosin. Involved in the last step in mycaminose biosynthesis by mediating dimethylation of the hexose C-3' amino group. In Streptomyces fradiae (Streptomyces roseoflavus), this protein is dTDP-3-amino-3,6-dideoxy-alpha-D-glucopyranose N,N-dimethyltransferase (tylM1).